A 311-amino-acid polypeptide reads, in one-letter code: Olfactory receptor 4K1 (311 aa).

Residues methionine 1–leucine 25 lie on the Extracellular side of the membrane. N-linked (GlcNAc...) asparagine glycosylation occurs at asparagine 5. Residues phenylalanine 26 to isoleucine 49 form a helical membrane-spanning segment. Residues serine 50 to serine 57 lie on the Cytoplasmic side of the membrane. The chain crosses the membrane as a helical span at residues proline 58–proline 79. Over lysine 80–glutamine 100 the chain is Extracellular. Residues cysteine 97 and cysteine 189 are joined by a disulfide bond. Residues isoleucine 101–tyrosine 120 form a helical membrane-spanning segment. Over aspartate 121–arginine 139 the chain is Cytoplasmic. Residues leucine 140 to serine 158 form a helical membrane-spanning segment. At histidine 159 to methionine 195 the chain is on the extracellular side. A helical transmembrane segment spans residues glutamate 196 to threonine 219. Residues isoleucine 220 to lysine 235 lie on the Cytoplasmic side of the membrane. Residues alanine 236 to tyrosine 258 form a helical membrane-spanning segment. Residues isoleucine 259–lysine 269 are Extracellular-facing. The chain crosses the membrane as a helical span at residues phenylalanine 270–leucine 289. Over arginine 290–asparagine 311 the chain is Cytoplasmic.

Belongs to the G-protein coupled receptor 1 family.

The protein resides in the cell membrane. In terms of biological role, odorant receptor. The chain is Olfactory receptor 4K1 (OR4K1) from Homo sapiens (Human).